The primary structure comprises 472 residues: 3-isopropylmalate dehydratase large subunit (472 aa).

The tract at residues Thr61–Ile80 is disordered. 3 residues coordinate [4Fe-4S] cluster: Cys353, Cys414, and Cys417.

It belongs to the aconitase/IPM isomerase family. LeuC type 1 subfamily. As to quaternary structure, heterodimer of LeuC and LeuD. Requires [4Fe-4S] cluster as cofactor.

It carries out the reaction (2R,3S)-3-isopropylmalate = (2S)-2-isopropylmalate. Its pathway is amino-acid biosynthesis; L-leucine biosynthesis; L-leucine from 3-methyl-2-oxobutanoate: step 2/4. Its function is as follows. Catalyzes the isomerization between 2-isopropylmalate and 3-isopropylmalate, via the formation of 2-isopropylmaleate. The chain is 3-isopropylmalate dehydratase large subunit from Saccharophagus degradans (strain 2-40 / ATCC 43961 / DSM 17024).